We begin with the raw amino-acid sequence, 222 residues long: Protein-L-isoaspartate O-methyltransferase (222 aa).

Ser69 is an active-site residue.

The protein belongs to the methyltransferase superfamily. L-isoaspartyl/D-aspartyl protein methyltransferase family.

The protein localises to the cytoplasm. The catalysed reaction is [protein]-L-isoaspartate + S-adenosyl-L-methionine = [protein]-L-isoaspartate alpha-methyl ester + S-adenosyl-L-homocysteine. Functionally, catalyzes the methyl esterification of L-isoaspartyl residues in peptides and proteins that result from spontaneous decomposition of normal L-aspartyl and L-asparaginyl residues. It plays a role in the repair and/or degradation of damaged proteins. The polypeptide is Protein-L-isoaspartate O-methyltransferase (Nitrosomonas eutropha (strain DSM 101675 / C91 / Nm57)).